The chain runs to 795 residues: Toll-like receptor 6 (795 aa).

The first 27 residues, 1–27 (MSQDRKPIVGSFHFVCALALIVGSMTP), serve as a signal peptide directing secretion. Over 28 to 584 (FSNELESMVD…FHMSPLSCDT (557 aa)) the chain is Extracellular. Asn-42 carries N-linked (GlcNAc...) asparagine glycosylation. LRR repeat units follow at residues 54-77 (TKAL…FLSE), 78-101 (LRVL…FNQD), 102-125 (LEYL…SLRH), 126-150 (LDLS…KLTF), 151-175 (LGLS…SCIL), 176-199 (LDLV…TTVL), 200-223 (HLVF…LGHL), 224-250 (QLSN…RGPT), 251-278 (LLNV…PRPV), 279-308 (EYLN…KSLM), 309-337 (IEHV…KMLS), 338-361 (ISDT…LNFT), 362-388 (QNVF…QRNG), 389-414 (LKNF…SLNS), 415-437 (LNSH…NLSS), 438-457 (NMLT…VLDL), 458-478 (HNNR…LQEL), 479-500 (NVAS…LSVL), and 501-524 (VIDH…IRSL). N-linked (GlcNAc...) asparagine glycosylation is present at Asn-114. Cysteines 117 and 139 form a disulfide. The N-linked (GlcNAc...) asparagine glycan is linked to Asn-144. N-linked (GlcNAc...) asparagine glycosylation is found at Asn-195 and Asn-214. Cys-235 and Cys-265 are oxidised to a cystine. Asn-253 and Asn-285 each carry an N-linked (GlcNAc...) asparagine glycan. Cys-348 and Cys-373 are oxidised to a cystine. N-linked (GlcNAc...) asparagine glycosylation is present at Asn-359. Residues Asn-401 and Asn-434 are each glycosylated (N-linked (GlcNAc...) asparagine). Cys-424 and Cys-447 are oxidised to a cystine. Residues 525 to 576 (TAGNNPFQCTCELRDFVKNIGWVAREVVEGWPDSYRCDYPESSKGTALRDFH) form the LRRCT domain. Residues 585–605 (VLLTVTIGATMLVLAVTGAFL) form a helical membrane-spanning segment. Topologically, residues 606-795 (CLYFDLPWYV…ALVNEDDVKT (190 aa)) are cytoplasmic. The TIR domain maps to 640–781 (LQFHAFVSYS…LFWANLRASF (142 aa)).

This sequence belongs to the Toll-like receptor family. Homodimer (via cytoplasmic TIR domain). Heterodimer with TLR2 via their respective extracellular domains. Binds MYD88 via their respective TIR domains. Interacts with CD36, following CD36 stimulation by oxLDL or amyloid-beta 42, and forms a heterodimer with TLR4. The trimeric complex is internalized and triggers inflammatory response. LYN kinase activity facilitates TLR4:TLR6 heterodimerization and signal initiation. The heterodimer TLR2:TLR6 interacts with CD14 and CD36 in response to triacylated lipopeptides. As to expression, detected in thymus, spleen, ovary and lung. Expressed in macrohpages.

The protein resides in the cell membrane. It localises to the cytoplasmic vesicle. The protein localises to the phagosome membrane. Its subcellular location is the membrane raft. It is found in the golgi apparatus. Participates in the innate immune response to Gram-positive bacteria and fungi. Specifically recognizes diacylated and, to a lesser extent, triacylated lipopeptides. In response to diacylated lipopeptides, forms the activation cluster TLR2:TLR6:CD14:CD36, this cluster triggers signaling from the cell surface and subsequently is targeted to the Golgi in a lipid-raft dependent pathway. Acts via MYD88 and TRAF6, leading to NF-kappa-B activation, cytokine secretion and the inflammatory response. Recognizes mycoplasmal macrophage-activating lipopeptide-2kD (MALP-2), soluble tuberculosis factor (STF), phenol-soluble modulin (PSM) and B.burgdorferi outer surface protein A lipoprotein (OspA-L) cooperatively with TLR2. In complex with TLR4, promotes sterile inflammation in monocytes/macrophages in response to oxidized low-density lipoprotein (oxLDL) or amyloid-beta 42. In this context, the initial signal is provided by oxLDL- or amyloid-beta 42-binding to CD36. This event induces the formation of a heterodimer of TLR4 and TLR6, which is rapidly internalized and triggers inflammatory response, leading to the NF-kappa-B-dependent production of CXCL1, CXCL2 and CCL9 cytokines, via MYD88 signaling pathway, and CCL5 cytokine, via TICAM1 signaling pathway, as well as IL1B secretion. This chain is Toll-like receptor 6 (Tlr6), found in Mus musculus (Mouse).